Reading from the N-terminus, the 427-residue chain is Serine--tRNA ligase (427 aa).

T235–E237 is a binding site for L-serine. Residues R266–E268 and V282 contribute to the ATP site. E289 is an L-serine binding site. An ATP-binding site is contributed by E353–S356. An L-serine-binding site is contributed by S389.

It belongs to the class-II aminoacyl-tRNA synthetase family. Type-1 seryl-tRNA synthetase subfamily. Homodimer. The tRNA molecule binds across the dimer.

It is found in the cytoplasm. It catalyses the reaction tRNA(Ser) + L-serine + ATP = L-seryl-tRNA(Ser) + AMP + diphosphate + H(+). The enzyme catalyses tRNA(Sec) + L-serine + ATP = L-seryl-tRNA(Sec) + AMP + diphosphate + H(+). It participates in aminoacyl-tRNA biosynthesis; selenocysteinyl-tRNA(Sec) biosynthesis; L-seryl-tRNA(Sec) from L-serine and tRNA(Sec): step 1/1. Its function is as follows. Catalyzes the attachment of serine to tRNA(Ser). Is also able to aminoacylate tRNA(Sec) with serine, to form the misacylated tRNA L-seryl-tRNA(Sec), which will be further converted into selenocysteinyl-tRNA(Sec). The polypeptide is Serine--tRNA ligase (Chlorobaculum parvum (strain DSM 263 / NCIMB 8327) (Chlorobium vibrioforme subsp. thiosulfatophilum)).